The chain runs to 563 residues: Anaerobic glycerol-3-phosphate dehydrogenase subunit A (563 aa).

Position 20-48 (20-48 (DVIIIGGGATGAGIARDCALRGIDCILLE)) interacts with FAD.

This sequence belongs to the FAD-dependent glycerol-3-phosphate dehydrogenase family. In terms of assembly, composed of a catalytic GlpA/B dimer and of membrane bound GlpC. FAD is required as a cofactor. It depends on FMN as a cofactor.

It localises to the cell inner membrane. The catalysed reaction is a quinone + sn-glycerol 3-phosphate = dihydroxyacetone phosphate + a quinol. Its pathway is polyol metabolism; glycerol degradation via glycerol kinase pathway; glycerone phosphate from sn-glycerol 3-phosphate (anaerobic route): step 1/1. This chain is Anaerobic glycerol-3-phosphate dehydrogenase subunit A (glpA), found in Haemophilus influenzae (strain ATCC 51907 / DSM 11121 / KW20 / Rd).